A 155-amino-acid polypeptide reads, in one-letter code: NADPH-dependent 7-cyano-7-deazaguanine reductase (155 aa).

Catalysis depends on Cys53, which acts as the Thioimide intermediate. Asp60 (proton donor) is an active-site residue. Residues 75-77 (VES) and 94-95 (HE) each bind substrate.

The protein belongs to the GTP cyclohydrolase I family. QueF type 1 subfamily.

The protein localises to the cytoplasm. The catalysed reaction is 7-aminomethyl-7-carbaguanine + 2 NADP(+) = 7-cyano-7-deazaguanine + 2 NADPH + 3 H(+). The protein operates within tRNA modification; tRNA-queuosine biosynthesis. Catalyzes the NADPH-dependent reduction of 7-cyano-7-deazaguanine (preQ0) to 7-aminomethyl-7-deazaguanine (preQ1). The polypeptide is NADPH-dependent 7-cyano-7-deazaguanine reductase (Hyphomonas neptunium (strain ATCC 15444)).